Here is a 212-residue protein sequence, read N- to C-terminus: uncharacterized protein (212 aa).

Belongs to the methyltransferase superfamily.

This is an uncharacterized protein from Synechocystis sp. (strain ATCC 27184 / PCC 6803 / Kazusa).